A 423-amino-acid chain; its full sequence is MAQFIDRRLNGKNKSAVNRQRFMRRYKEQIKESVADAVNRRSITNTETGEDVAIPHKDIKEPLFHQGKGGLRERVHPGNDQFITGDKIERPKGGQGGGGAGDGDASADGEGQDDFVFQISKDEYLDLLFEDLALPNLKKNQVNKITEWKKHRAGYQTAGMPSNISIVRSLQQSLARRTAMSAGKKRLLHELELELERIQNQEPAQKLEEMKLKQEIAELRKAIESVPFIDTFDLRFKNYERKPVPSSQAVMFCLMDVSGSMDQATKDIAKRFYVLLYLFLNRTYENVEVVFIRHHTQAKEVDEHEFFYSQETGGTIVSSALKLMDEIVKARYPVGEWNIYAAQASDGDNWADDSPRCKELLTSKLLPNCQYYAYIEITRRSHQTLWHEYEKLEESFDNFAMKNIRSVEDIFPVFRELFHKETA.

Residues glutamine 81–glycine 111 form a disordered region. Positions glycine 93–aspartate 102 are enriched in gly residues.

The protein belongs to the UPF0229 family.

The sequence is that of UPF0229 protein VV1_2091 from Vibrio vulnificus (strain CMCP6).